A 181-amino-acid polypeptide reads, in one-letter code: Protein Syd (181 aa).

Belongs to the Syd family.

It is found in the cell inner membrane. Interacts with the SecY protein in vivo. May bind preferentially to an uncomplexed state of SecY, thus functioning either as a chelating agent for excess SecY in the cell or as a regulatory factor that negatively controls the translocase function. This Klebsiella pneumoniae (strain 342) protein is Protein Syd.